A 222-amino-acid chain; its full sequence is UPF0173 metal-dependent hydrolase Nther_2337 (222 aa).

It belongs to the UPF0173 family.

This chain is UPF0173 metal-dependent hydrolase Nther_2337, found in Natranaerobius thermophilus (strain ATCC BAA-1301 / DSM 18059 / JW/NM-WN-LF).